The sequence spans 47 residues: Putative glycosylation-dependent cell adhesion molecule 1 (47 aa).

The first 18 residues, 1 to 18, serve as a signal peptide directing secretion; sequence MKFFMVLLPASLASTSLA.

It belongs to the PP3/GlyCAM-1 family. As to expression, expressed in cells harvested from milk of lactating women. Not found in other tissues.

In Homo sapiens (Human), this protein is Putative glycosylation-dependent cell adhesion molecule 1 (GLYCAM1).